Here is a 142-residue protein sequence, read N- to C-terminus: Peptide methionine sulfoxide reductase MsrB (142 aa).

One can recognise a MsrB domain in the interval 2–125 (LKKDKSELTD…NSAAIQFIPY (124 aa)). Catalysis depends on Cys114, which acts as the Nucleophile.

Belongs to the MsrB Met sulfoxide reductase family.

It catalyses the reaction L-methionyl-[protein] + [thioredoxin]-disulfide + H2O = L-methionyl-(R)-S-oxide-[protein] + [thioredoxin]-dithiol. The sequence is that of Peptide methionine sulfoxide reductase MsrB from Staphylococcus aureus (strain USA300).